The chain runs to 365 residues: Eukaryotic translation initiation factor 3 subunit H (365 aa).

Residues 15 to 166 (ILLDSLVVMK…IRAWRLSTAA (152 aa)) form the MPN domain. Residues 276 to 295 (KRQQENESRLARGDPPLPMD) form a disordered region. The segment covering 277 to 287 (RQQENESRLAR) has biased composition (basic and acidic residues).

Belongs to the eIF-3 subunit H family. As to quaternary structure, component of the eukaryotic translation initiation factor 3 (eIF-3) complex.

It localises to the cytoplasm. In terms of biological role, component of the eukaryotic translation initiation factor 3 (eIF-3) complex, which is involved in protein synthesis of a specialized repertoire of mRNAs and, together with other initiation factors, stimulates binding of mRNA and methionyl-tRNAi to the 40S ribosome. The eIF-3 complex specifically targets and initiates translation of a subset of mRNAs involved in cell proliferation. The polypeptide is Eukaryotic translation initiation factor 3 subunit H (Caenorhabditis briggsae).